We begin with the raw amino-acid sequence, 60 residues long: Large ribosomal subunit protein bL32 (60 aa).

Positions 1-22 (MAVPARHTSKAKKNKRRTHYKL) are disordered. Positions 7–20 (HTSKAKKNKRRTHY) are enriched in basic residues.

This sequence belongs to the bacterial ribosomal protein bL32 family.

This chain is Large ribosomal subunit protein bL32, found in Streptococcus pyogenes serotype M3 (strain ATCC BAA-595 / MGAS315).